Here is a 290-residue protein sequence, read N- to C-terminus: uncharacterized protein (290 aa).

The Schiff-base intermediate with substrate role is filled by K203.

This sequence belongs to the DeoC/FbaB aldolase family.

This is an uncharacterized protein from Pasteurella multocida (strain Pm70).